The primary structure comprises 361 residues: 3-dehydroquinate synthase (361 aa).

Belongs to the archaeal-type DHQ synthase family.

It carries out the reaction 2-amino-2,3,7-trideoxy-D-lyxo-hept-6-ulosonate + NAD(+) + H2O = 3-dehydroquinate + NH4(+) + NADH + H(+). Its function is as follows. Catalyzes the oxidative deamination and cyclization of 2-amino-3,7-dideoxy-D-threo-hept-6-ulosonic acid (ADH) to yield 3-dehydroquinate (DHQ), which is fed into the canonical shikimic pathway of aromatic amino acid biosynthesis. This chain is 3-dehydroquinate synthase (aroB'), found in Methanocaldococcus jannaschii (strain ATCC 43067 / DSM 2661 / JAL-1 / JCM 10045 / NBRC 100440) (Methanococcus jannaschii).